Reading from the N-terminus, the 698-residue chain is DNA ligase (698 aa).

Residues 35 to 39 (DSVYD), 84 to 85 (SL), and E123 contribute to the NAD(+) site. The active-site N6-AMP-lysine intermediate is K125. NAD(+) is bound by residues R146, E183, K302, and K326. 4 residues coordinate Zn(2+): C420, C423, C438, and C443. The region spanning 612-698 (NGKGHLNGQT…QNSADTIHLL (87 aa)) is the BRCT domain.

The protein belongs to the NAD-dependent DNA ligase family. LigA subfamily. It depends on Mg(2+) as a cofactor. The cofactor is Mn(2+).

The enzyme catalyses NAD(+) + (deoxyribonucleotide)n-3'-hydroxyl + 5'-phospho-(deoxyribonucleotide)m = (deoxyribonucleotide)n+m + AMP + beta-nicotinamide D-nucleotide.. In terms of biological role, DNA ligase that catalyzes the formation of phosphodiester linkages between 5'-phosphoryl and 3'-hydroxyl groups in double-stranded DNA using NAD as a coenzyme and as the energy source for the reaction. It is essential for DNA replication and repair of damaged DNA. This is DNA ligase from Synechococcus sp. (strain WH7803).